The chain runs to 229 residues: Biosynthetic peptidoglycan transglycosylase (229 aa).

The chain crosses the membrane as a helical span at residues 10-30 (LLLALVLVVLYQFWIFMHILW).

It belongs to the glycosyltransferase 51 family.

Its subcellular location is the cell inner membrane. The catalysed reaction is [GlcNAc-(1-&gt;4)-Mur2Ac(oyl-L-Ala-gamma-D-Glu-L-Lys-D-Ala-D-Ala)](n)-di-trans,octa-cis-undecaprenyl diphosphate + beta-D-GlcNAc-(1-&gt;4)-Mur2Ac(oyl-L-Ala-gamma-D-Glu-L-Lys-D-Ala-D-Ala)-di-trans,octa-cis-undecaprenyl diphosphate = [GlcNAc-(1-&gt;4)-Mur2Ac(oyl-L-Ala-gamma-D-Glu-L-Lys-D-Ala-D-Ala)](n+1)-di-trans,octa-cis-undecaprenyl diphosphate + di-trans,octa-cis-undecaprenyl diphosphate + H(+). The protein operates within cell wall biogenesis; peptidoglycan biosynthesis. Its function is as follows. Peptidoglycan polymerase that catalyzes glycan chain elongation from lipid-linked precursors. The chain is Biosynthetic peptidoglycan transglycosylase from Methylobacillus flagellatus (strain ATCC 51484 / DSM 6875 / VKM B-1610 / KT).